A 171-amino-acid chain; its full sequence is Shikimate kinase (171 aa).

Position 14–19 (14–19 (GAGKST)) interacts with ATP. Serine 18 lines the Mg(2+) pocket. Residues aspartate 36, arginine 60, and glycine 82 each contribute to the substrate site. An ATP-binding site is contributed by arginine 120. Arginine 139 contributes to the substrate binding site. Glutamine 156 serves as a coordination point for ATP.

The protein belongs to the shikimate kinase family. Monomer. Mg(2+) serves as cofactor.

It is found in the cytoplasm. The enzyme catalyses shikimate + ATP = 3-phosphoshikimate + ADP + H(+). Its pathway is metabolic intermediate biosynthesis; chorismate biosynthesis; chorismate from D-erythrose 4-phosphate and phosphoenolpyruvate: step 5/7. Functionally, catalyzes the specific phosphorylation of the 3-hydroxyl group of shikimic acid using ATP as a cosubstrate. The polypeptide is Shikimate kinase (Alteromonas mediterranea (strain DSM 17117 / CIP 110805 / LMG 28347 / Deep ecotype)).